Reading from the N-terminus, the 444-residue chain is Trigger factor (444 aa).

In terms of domain architecture, PPIase FKBP-type spans 166–251 (GDQVVIDFKG…VKAVKAPKAA (86 aa)).

This sequence belongs to the FKBP-type PPIase family. Tig subfamily.

It is found in the cytoplasm. It carries out the reaction [protein]-peptidylproline (omega=180) = [protein]-peptidylproline (omega=0). Functionally, involved in protein export. Acts as a chaperone by maintaining the newly synthesized protein in an open conformation. Functions as a peptidyl-prolyl cis-trans isomerase. The chain is Trigger factor from Cereibacter sphaeroides (strain ATCC 17029 / ATH 2.4.9) (Rhodobacter sphaeroides).